Consider the following 290-residue polypeptide: Acetyl-coenzyme A carboxylase carboxyl transferase subunit beta (290 aa).

Positions 28-290 (VMTKCPQCKK…GGGESGWWRN (263 aa)) constitute a CoA carboxyltransferase N-terminal domain. Residues Cys32, Cys35, Cys51, and Cys54 each coordinate Zn(2+). The segment at 32–54 (CPQCKKIMYTKELVKNLRVCLSC) adopts a C4-type zinc-finger fold.

Belongs to the AccD/PCCB family. As to quaternary structure, acetyl-CoA carboxylase is a heterohexamer composed of biotin carboxyl carrier protein (AccB), biotin carboxylase (AccC) and two subunits each of ACCase subunit alpha (AccA) and ACCase subunit beta (AccD). Zn(2+) serves as cofactor.

It localises to the cytoplasm. It catalyses the reaction N(6)-carboxybiotinyl-L-lysyl-[protein] + acetyl-CoA = N(6)-biotinyl-L-lysyl-[protein] + malonyl-CoA. It participates in lipid metabolism; malonyl-CoA biosynthesis; malonyl-CoA from acetyl-CoA: step 1/1. Functionally, component of the acetyl coenzyme A carboxylase (ACC) complex. Biotin carboxylase (BC) catalyzes the carboxylation of biotin on its carrier protein (BCCP) and then the CO(2) group is transferred by the transcarboxylase to acetyl-CoA to form malonyl-CoA. This is Acetyl-coenzyme A carboxylase carboxyl transferase subunit beta from Geobacillus thermodenitrificans (strain NG80-2).